Here is a 576-residue protein sequence, read N- to C-terminus: Phosphoenolpyruvate-protein phosphotransferase (576 aa).

The active-site Tele-phosphohistidine intermediate is the His189. Arg296 and Arg332 together coordinate phosphoenolpyruvate. The Mg(2+) site is built by Glu431 and Asp455. Phosphoenolpyruvate contacts are provided by residues 454-455 (ND) and Arg465. Residue Cys502 is the Proton donor of the active site.

The protein belongs to the PEP-utilizing enzyme family. In terms of assembly, homodimer. The cofactor is Mg(2+).

Its subcellular location is the cytoplasm. The enzyme catalyses L-histidyl-[protein] + phosphoenolpyruvate = N(pros)-phospho-L-histidyl-[protein] + pyruvate. General (non sugar-specific) component of the phosphoenolpyruvate-dependent sugar phosphotransferase system (sugar PTS). This major carbohydrate active-transport system catalyzes the phosphorylation of incoming sugar substrates concomitantly with their translocation across the cell membrane. Enzyme I transfers the phosphoryl group from phosphoenolpyruvate (PEP) to the phosphoryl carrier protein (HPr). This chain is Phosphoenolpyruvate-protein phosphotransferase (ptsI), found in Buchnera aphidicola subsp. Baizongia pistaciae (strain Bp).